A 1152-amino-acid polypeptide reads, in one-letter code: Calcium-activated potassium channel subunit alpha-1 (1152 aa).

The disordered stretch occupies residues methionine 1–glutamate 37. Residues methionine 1–methionine 60 are Extracellular-facing. Residues serine 15 to serine 34 show a composition bias toward low complexity. A helical membrane pass occupies residues tryptophan 61 to leucine 81. The Cytoplasmic portion of the chain corresponds to tryptophan 82 to arginine 152. 3 S-palmitoyl cysteine lipidation sites follow: cysteine 92, cysteine 93, and cysteine 95. A helical membrane pass occupies residues valine 153–serine 173. The Extracellular segment spans residues serine 174–threonine 188. Residues leucine 189–alanine 209 traverse the membrane as a helical segment. The Cytoplasmic segment spans residues alanine 210–lysine 213. A helical transmembrane segment spans residues leucine 214–valine 234. The Extracellular portion of the chain corresponds to serine 235–leucine 238. Residues asparagine 239–isoleucine 259 traverse the membrane as a helical; Voltage-sensor segment. Over leucine 260 to leucine 274 the chain is Cytoplasmic. Residues valine 275–valine 295 traverse the membrane as a helical segment. Over glutamate 296–glutamine 309 the chain is Extracellular. The segment at residues alanine 310 to valine 332 is an intramembrane region (pore-forming). A Selectivity for potassium motif is present at residues threonine 326–tyrosine 329. Over tyrosine 333–leucine 341 the chain is Extracellular. Residues phenylalanine 342–isoleucine 362 traverse the membrane as a helical segment. The Cytoplasmic segment spans residues glutamate 363–leucine 1152. The region spanning arginine 381–isoleucine 523 is the RCK N-terminal 1 domain. Positions 413, 436, and 438 each coordinate Mg(2+). Positions leucine 530–phenylalanine 550 are segment S7. Positions leucine 587 to isoleucine 607 are segment S8. The heme-binding motif stretch occupies residues cysteine 651 to histidine 655. The disordered stretch occupies residues glutamate 675 to arginine 703. Threonine 679 is subject to Phosphothreonine. Phosphoserine occurs at positions 681, 694, and 698. A segment S9 region spans residues valine 753 to leucine 773. The RCK N-terminal 2 domain maps to serine 755–proline 899. Threonine 886 is subject to Phosphothreonine. Phosphoserine is present on residues serine 894 and serine 898. The short motif at threonine 919–glutamate 941 is the Calcium bowl element. 4 residues coordinate Ca(2+): glutamine 928, aspartate 931, aspartate 934, and aspartate 936. The segment S10 stretch occupies residues phenylalanine 948–phenylalanine 968. Over residues arginine 1102 to serine 1127 the composition is skewed to low complexity. Positions arginine 1102–leucine 1152 are disordered. Positions lysine 1136–leucine 1152 are enriched in basic and acidic residues. Serine 1137 and serine 1140 each carry phosphoserine.

Belongs to the potassium channel family. Calcium-activated (TC 1.A.1.3) subfamily. KCa1.1/KCNMA1 sub-subfamily. In terms of assembly, homotetramer; which constitutes the calcium-activated potassium channel. Interacts with beta subunits KCNMB1, KCNMB2, KCNMB3 and KCNMB4. Interacts with gamma subunits LRRC26, LRRC38, LRRC52 and LRRC55. Beta and gamma subunits are accessory, and modulate its activity. Interacts with RAB11B. Phosphorylated. Phosphorylation by kinases such as PKA and/or PKG. In smooth muscles, phosphorylation affects its activity. Post-translationally, palmitoylation by ZDHHC22 and ZDHHC23 within the intracellular linker between the S0 and S1 transmembrane domains regulates localization to the plasma membrane. Depalmitoylated by LYPLA1 and LYPLAL1, leading to retard exit from the trans-Golgi network.

The protein resides in the cell membrane. It carries out the reaction K(+)(in) = K(+)(out). Its activity is regulated as follows. Ethanol and carbon monoxide-bound heme increase channel activation. Heme inhibits channel activation. In terms of biological role, potassium channel activated by both membrane depolarization or increase in cytosolic Ca(2+) that mediates export of K(+). It is also activated by the concentration of cytosolic Mg(2+). Its activation dampens the excitatory events that elevate the cytosolic Ca(2+) concentration and/or depolarize the cell membrane. It therefore contributes to repolarization of the membrane potential. Plays a key role in controlling excitability in a number of systems, such as regulation of the contraction of smooth muscle, the tuning of hair cells in the cochlea, regulation of transmitter release, and innate immunity. In smooth muscles, its activation by high level of Ca(2+), caused by ryanodine receptors in the sarcoplasmic reticulum, regulates the membrane potential. In cochlea cells, its number and kinetic properties partly determine the characteristic frequency of each hair cell and thereby helps to establish a tonotopic map. Kinetics of KCNMA1 channels are determined by alternative splicing, phosphorylation status and its combination with modulating beta subunits. Highly sensitive to both iberiotoxin (IbTx) and charybdotoxin (CTX). This is Calcium-activated potassium channel subunit alpha-1 (KCNMA1) from Sus scrofa (Pig).